Here is an 805-residue protein sequence, read N- to C-terminus: MANVSKKVSWSGRDRDDEEAAPLLRRTARPGGGTPLLNGAGPGAARQSPRSALFRVGHMSSVELDDELLDPDMDPPHPFPKEIPHNEKLLSLKYESLDYDNSENQLFLEEERRINHTAFRTVEIKRWVICALIGILTGLVACFIDIVVENLAGLKYRVIKGNIDKFTEKGGLSFSLLLWATLNAAFVLVGSVIVAFIEPVAAGSGIPQIKCFLNGVKIPHVVRLKTLVIKVSGVILSVVGGLAVGKEGPMIHSGSVIAAGISQGRSTSLKRDFKIFEYFRRDTEKRDFVSAGAAAGVSAAFGAPVGGVLFSLEEGASFWNQFLTWRIFFASMISTFTLNFVLSIYHGNMWDLSSPGLINFGRFDSEKMAYTIHEIPVFIAMGVVGGVLGAVFNALNYWLTMFRIRYIHRPCLQVIEAVLVAAVTATVAFVLIYSSRDCQPLQGGSMSYPLQLFCADGEYNSMAAAFFNTPEKSVVSLFHDPPGSYNPLTLGLFTLVYFFLACWTYGLTVSAGVFIPSLLIGAAWGRLFGISLSYLTGAAIWADPGKYALMGAAAQLGGIVRMTLSLTVIMMEATSNVTYGFPIMLVLMTAKIVGDVFIEGLYDMHIQLQSVPFLHWEAPVTSHSLTAREVMSTPVTCLRRREKVGVIVDVLSDTASNHNGFPVVEHADDTQPARLQGLILRSQLIVLLKHKVFVERSNLGLVQRRLRLKDFRDAYPRFPPIQSIHVSQDERECTMDLSEFMNPSPYTVPQEASLPRVFKLFRALGLRHLVVVDNRNQVVGLVTRKDLARYRLGKRGLEELSLAQT.

Residues 1 to 49 are disordered; the sequence is MANVSKKVSWSGRDRDDEEAAPLLRRTARPGGGTPLLNGAGPGAARQSP. Over 1-126 the chain is Cytoplasmic; the sequence is MANVSKKVSW…TAFRTVEIKR (126 aa). 2 positions are modified to phosphoserine: serine 9 and serine 60. The next 2 helical transmembrane spans lie at 127-159 and 174-197; these read WVICALIGILTGLVACFIDIVVENLAGLKYRVI and FSLLLWATLNAAFVLVGSVIVAFI. The Selectivity filter part_1 signature appears at 203 to 207; that stretch reads GSGIP. Position 204 (serine 204) interacts with chloride. The helical intramembrane region spans 206–213; that stretch reads IPQIKCFL. 2 helical membrane-spanning segments follow: residues 223–241 and 247–264; these read RLKTLVIKVSGVILSVVGG and EGPMIHSGSVIAAGISQG. Residues 245-249 carry the Selectivity filter part_2 motif; the sequence is GKEGP. Intramembrane regions (helical) lie at residues 288-300 and 304-312; these read FVSAGAAAGVSAA and PVGGVLFSL. The next 5 membrane-spanning stretches (helical) occupy residues 322–341, 375–405, 410–432, 487–507, and 512–535; these read FLTWRIFFASMISTFTLNFV, IPVFIAMGVVGGVLGAVFNALNYWLTMFRIR, PCLQVIEAVLVAAVTATVAFVLI, PLTLGLFTLVYFFLACWTYGL, and GVFIPSLLIGAAWGRLFGISLSYL. A Selectivity filter part_3 motif is present at residues 512 to 516; the sequence is GVFIP. Phenylalanine 514 lines the chloride pocket. Positions 545 to 559 form an intramembrane region, helical; it reads GKYALMGAAAQLGGI. Positions 560–562 form an intramembrane region, note=Loop between two helices; the sequence is VRM. An intramembrane region (helical) is located at residues 563 to 574; sequence TLSLTVIMMEAT. The segment at residues 575 to 578 is an intramembrane region (note=Loop between two helices); sequence SNVT. Residues 579–597 form a helical membrane-spanning segment; that stretch reads YGFPIMLVLMTAKIVGDVF. Residues 598–805 are Cytoplasmic-facing; it reads IEGLYDMHIQ…GLEELSLAQT (208 aa). Tyrosine 602 is a chloride binding site. CBS domains lie at 631–695 and 741–799; these read MSTP…VFVE and MNPS…GLEE. ATP-binding positions include 658–660 and 783–786; these read HNG and TRKD. Phosphoserine is present on serine 801.

The protein belongs to the chloride channel (TC 2.A.49) family. ClC-7/CLCN7 subfamily. In terms of assembly, chloride channel 7 are heteromers of alpha (CLCN7) and beta (OSTM1) subunits. In terms of tissue distribution, brain and kidney.

It localises to the lysosome membrane. The catalysed reaction is 2 chloride(in) + H(+)(out) = 2 chloride(out) + H(+)(in). Its function is as follows. Slowly voltage-gated channel mediating the exchange of chloride ions against protons. Functions as antiporter and contributes to the acidification of the lysosome lumen and may be involved in maintaining lysosomal pH. The CLC channel family contains both chloride channels and proton-coupled anion transporters that exchange chloride or another anion for protons. The presence of conserved gating glutamate residues is typical for family members that function as antiporters. In Homo sapiens (Human), this protein is H(+)/Cl(-) exchange transporter 7.